Consider the following 340-residue polypeptide: Ferrochelatase (340 aa).

Residues His189 and Glu292 each coordinate Fe cation.

Belongs to the ferrochelatase family.

The protein resides in the cytoplasm. It carries out the reaction heme b + 2 H(+) = protoporphyrin IX + Fe(2+). The protein operates within porphyrin-containing compound metabolism; protoheme biosynthesis; protoheme from protoporphyrin-IX: step 1/1. Catalyzes the ferrous insertion into protoporphyrin IX. The protein is Ferrochelatase of Pseudomonas syringae pv. tomato (strain ATCC BAA-871 / DC3000).